Consider the following 153-residue polypeptide: Neuromedin-S (153 aa).

An N-terminal signal peptide occupies residues 1–26 (MKHLRPQFPLILAIYCFCMLQIPSSG). 3 consecutive propeptides follow at residues 27–69 (FPQP…IYKR), 70–105 (FLFH…ANRR), and 106–108 (MKR). Asparagine 141 is subject to Asparagine amide. The propeptide occupies 144–153 (NIEDEAQIQW).

This sequence belongs to the NmU family.

The protein resides in the secreted. Its function is as follows. Implicated in the regulation of circadian rhythms through autocrine and/or paracrine actions. The polypeptide is Neuromedin-S (NMS) (Homo sapiens (Human)).